The sequence spans 59 residues: Large ribosomal subunit protein uL30 (59 aa).

This sequence belongs to the universal ribosomal protein uL30 family. In terms of assembly, part of the 50S ribosomal subunit.

The polypeptide is Large ribosomal subunit protein uL30 (Clostridium beijerinckii (strain ATCC 51743 / NCIMB 8052) (Clostridium acetobutylicum)).